A 688-amino-acid chain; its full sequence is Sodium channel and clathrin linker 1 (688 aa).

Ala2 bears the N-acetylalanine mark. A coiled-coil region spans residues 69–673 (ELNGQLKYYQ…SASQQLSVIT (605 aa)). Position 681 is a phosphoserine (Ser681).

As to quaternary structure, interacts with SCN10A and clathrin. Identified in a complex containing SCN10A, clathrin and SCLT1.

It is found in the cytoplasm. Its subcellular location is the cytoskeleton. The protein resides in the microtubule organizing center. The protein localises to the centrosome. It localises to the centriole. In terms of biological role, adapter protein that links SCN10A to clathrin. Regulates SCN10A channel activity, possibly by promoting channel internalization. This Homo sapiens (Human) protein is Sodium channel and clathrin linker 1 (SCLT1).